The sequence spans 397 residues: uncharacterized protein (397 aa).

The next 10 helical transmembrane spans lie at 2–24 (LNLL…PGIH), 44–66 (YIPF…SAFL), 92–114 (AIVL…SLFL), 124–143 (AFYC…FILY), 150–169 (SVWE…AVLY), 173–195 (AFNI…INNL), 255–277 (FIVS…VIFI), 297–319 (INTA…LNLS), 331–350 (FKFL…IIGS), and 354–373 (YLIY…LLAV).

The protein resides in the cell membrane. This is an uncharacterized protein from Methanocaldococcus jannaschii (strain ATCC 43067 / DSM 2661 / JAL-1 / JCM 10045 / NBRC 100440) (Methanococcus jannaschii).